The primary structure comprises 268 residues: MNRYAQLFSRLDEANQGAFVPFVMLGDPTPELSLAIVDALVAGGADALELGIPFSDPVADGPTIQGAALRAFESHTTPDDCFELLGRIRAKYPQLPIGLLVYANLVYVRKIDGFYEKCQQAGVDSVLVADVPVQMCAPYKAAADKFGIDSIFIAPPNGDAETLKQVAELGNGYTYLVSRAGVTGAETKAGMPVEGLINTLREFNAPPALLGFGISEPTQVREAIAAGAAGAISGSAVVKIIETHHQNPEHMLNRLKEFVEGMKAATNR.

Active-site proton acceptor residues include E49 and D60.

It belongs to the TrpA family. Tetramer of two alpha and two beta chains.

It carries out the reaction (1S,2R)-1-C-(indol-3-yl)glycerol 3-phosphate + L-serine = D-glyceraldehyde 3-phosphate + L-tryptophan + H2O. It participates in amino-acid biosynthesis; L-tryptophan biosynthesis; L-tryptophan from chorismate: step 5/5. In terms of biological role, the alpha subunit is responsible for the aldol cleavage of indoleglycerol phosphate to indole and glyceraldehyde 3-phosphate. The chain is Tryptophan synthase alpha chain from Aeromonas hydrophila subsp. hydrophila (strain ATCC 7966 / DSM 30187 / BCRC 13018 / CCUG 14551 / JCM 1027 / KCTC 2358 / NCIMB 9240 / NCTC 8049).